A 698-amino-acid polypeptide reads, in one-letter code: Pheromone-regulated protein PRM7 (698 aa).

Disordered stretches follow at residues 1-65 (MYRT…IGNS), 133-183 (ESTT…SAVT), 197-274 (SVDQ…TVTI), and 455-480 (SASSSRSSATSIIKPNMPVSSNDSKT). Low complexity-rich tracts occupy residues 9–56 (EVTT…TTSA) and 158–183 (VTTSTDPTSSSDVATSADPTSSSAVT). Over residues 455–465 (SASSSRSSATS) the composition is skewed to low complexity.

This is Pheromone-regulated protein PRM7 (PRM7) from Saccharomyces cerevisiae (strain ATCC 204508 / S288c) (Baker's yeast).